The following is a 2442-amino-acid chain: Histone lysine acetyltransferase CREBBP (2442 aa).

Disordered regions lie at residues Met-1–Leu-40 and Arg-74–Ser-168. Ala-2 is modified (N-acetylalanine). The span at Pro-20–Phe-30 shows a compositional bias: polar residues. Residue Ser-120 is modified to Phosphoserine. Residues Gly-125 to Ser-168 show a composition bias toward polar residues. The residue at position 219 (Arg-219) is an Omega-N-methylarginine. The segment at Pro-226–Ala-409 is interaction with SRCAP. Positions Gly-261 to Thr-272 are enriched in low complexity. A disordered region spans residues Gly-261–Thr-290. Polar residues predominate over residues Ser-273–Gly-284. The TAZ-type 1 zinc-finger motif lies at Asp-346 to Leu-432. Zn(2+) is bound by residues His-362, Cys-366, Cys-379, Cys-384, His-393, Cys-397, Cys-403, Cys-408, His-417, Cys-421, Cys-426, and Cys-429. The 80-residue stretch at Gly-586–Glu-665 folds into the KIX domain. An asymmetric dimethylarginine mark is found at Arg-600 and Arg-624. An N6-acetyllysine modification is found at Lys-656. A compositionally biased stretch (polar residues) spans Phe-792–Gln-825. Residues Phe-792–Lys-1084 form a disordered region. Pro residues-rich tracts occupy residues Pro-846–Ala-862 and Pro-874–Pro-887. Positions Val-894 to Ser-906 are enriched in polar residues. 2 stretches are compositionally biased toward low complexity: residues Ser-909 to Gln-930 and Pro-938 to Pro-957. Residues Pro-974–Pro-989 are compositionally biased toward polar residues. Lys-999 participates in a covalent cross-link: Glycyl lysine isopeptide (Lys-Gly) (interchain with G-Cter in SUMO1). Over residues Ala-1012–Met-1022 the composition is skewed to basic and acidic residues. N6-acetyllysine is present on Lys-1015. Position 1031 is a phosphoserine (Ser-1031). Basic and acidic residues predominate over residues Val-1033 to Ala-1060. Residues Lys-1034 and Lys-1057 each participate in a glycyl lysine isopeptide (Lys-Gly) (interchain with G-Cter in SUMO1) cross-link. Polar residues predominate over residues Ser-1067–Gln-1080. Ser-1077 is modified (phosphoserine). Positions Phe-1086–Val-1193 constitute a Bromo domain. The tract at residues Asp-1125–Lys-1171 is interaction with histone. The interaction with ASF1A stretch occupies residues Asn-1163 to Lys-1181. Lys-1217 is subject to N6-acetyllysine. Positions Lys-1324 to Gln-1701 constitute a CBP/p300-type HAT domain. Ser-1383 and Ser-1387 each carry phosphoserine; by IKKA. An interaction with histone region spans residues Tyr-1434–Asp-1436. Residues Leu-1435–Ser-1437, Arg-1447–Thr-1448, Ile-1494, Arg-1499, and Trp-1503 each bind acetyl-CoA. A coiled-coil region spans residues Asn-1548–Thr-1575. The segment covering Leu-1557–Ser-1569 has biased composition (basic and acidic residues). The tract at residues Leu-1557 to Asn-1616 is disordered. Lys-1584, Lys-1592, Lys-1593, Lys-1596, and Lys-1598 each carry N6-acetyllysine. Positions Ala-1586–Lys-1596 are enriched in basic residues. A ZZ-type zinc finger spans residues Arg-1703–Asp-1751. Zn(2+) contacts are provided by Cys-1708, Cys-1711, Cys-1721, Cys-1724, Cys-1730, Cys-1733, His-1739, and His-1741. N6-acetyllysine is present on residues Lys-1742 and Lys-1745. Ser-1764 bears the Phosphoserine mark. The TAZ-type 2 zinc-finger motif lies at Gln-1766 to Ile-1847. The disordered stretch occupies residues Thr-1875 to Ala-1960. 2 stretches are compositionally biased toward pro residues: residues Pro-1901–Ser-1913 and Pro-1944–Ala-1955. Phosphoserine is present on residues Ser-2064, Ser-2077, and Ser-2080. The tract at residues Asn-2112 to Ser-2421 is disordered. 4 stretches are compositionally biased toward low complexity: residues Gln-2113–Pro-2138, Gln-2197–Gln-2217, Met-2261–Gly-2280, and Ile-2287–Ile-2305. Composition is skewed to polar residues over residues Ser-2315–Ala-2327 and Gln-2334–Val-2343. Over residues Val-2349–Ser-2372 the composition is skewed to pro residues. Position 2351 is a phosphoserine (Ser-2351). Residues Gln-2411–Ser-2421 are compositionally biased toward polar residues.

As to quaternary structure, part of a complex composed of MSX3, CREBBP/CBP AND EP300/p300; the interaction with MSX3 decreases histone acetylation activity. Found in a complex containing NCOA2; NCOA3; IKKA; IKKB and IKBKG. Probably part of a complex with HIF1A and EP300. Interacts with phosphorylated CREB1. Interacts with the C-terminal region of CITED4. The TAZ-type 1 domain interacts with HIF1A. Interacts with SRCAP, CARM1, ELF3, MLLT7/FOXO4, N4BP2, NCOA1, NCOA3, NCOA6, PCAF, DDX5, DDX17, PELP1, PML, SMAD1, SMAD2, SMAD3, SPIB, TRERF1 and ZCCHC12. Interacts with KLF1; the interaction results in acetylation and enhancement of transcriptional activity of KLF1. Interacts with DAXX; the interaction is dependent on CBP sumoylation and results in suppression of the transcriptional activity via recruitment of HDAC2 to DAXX. Interacts with MAF. Interacts with MTDH. Interacts with MAFG; the interaction acetylates MAFG in the basic region and stimulates NFE2 transcriptional activity through increasing its DNA-binding activity. Interacts with IRF2; the interaction acetylates IRF2 and regulates its activity on the H4 promoter. Interacts (via N-terminus) with SS18L1/CREST (via C-terminus). Interacts with IRF3 (when phosphorylated); forming the dsRNA-activated factor 1 (DRAF1), a complex which activates the transcription of the type I interferon genes. Interacts with MECOM. Interacts with CITED1 (via C-terminus) Interacts with GATA1; the interaction results in acetylation and enhancement of transcriptional activity of GATA1. Interacts with FOXO1; the interaction acetylates FOXO1 and inhibits its transcriptional activity. Interacts with NPAS2, CLOCK and BMAL1. Interacts with ASF1A and ASF1B; this promotes histone acetylation. Interacts with acetylated TP53/p53 and with the acetylated histones H3 and H4. Interacts (via transactivation domain and C-terminus) with PCNA; the interaction occurs on chromatin in UV-irradiated damaged cells. Interacts with DHX9 (via N-terminus); this interaction mediates association with RNA polymerase II holoenzyme and stimulates CREB-dependent transcriptional activation. Interacts with SMAD4; negatively regulated by ZBTB7A. Forms a complex with KMT2A and CREB1. Interacts with DDX3X; this interaction may facilitate HNF4A acetylation. Interacts with MSX1; the interaction may inhibit MSX1 autoinactivation. Interacts with MSX3. Interacts with ACSS2. Post-translationally, methylation of the KIX domain by CARM1 blocks association with CREB. This results in the blockade of CREB signaling, and in activation of apoptotic response. In terms of processing, phosphorylated by CHUK/IKKA at Ser-1383 and Ser-1387; these phosphorylations promote cell growth by switching the binding preference of CREBBP from TP53 to NF-kappa-B. Sumoylation negatively regulates transcriptional activity via the recruitment of DAAX. Post-translationally, autoacetylation is required for binding to protein substrates, such as acetylated histones and acetylated TP53/p53. Autoacetylation is induced by glucose and fatty acids. As to expression, expressed in hypothalamus and cortex.

It localises to the cytoplasm. It is found in the nucleus. The enzyme catalyses L-lysyl-[histone] + acetyl-CoA = N(6)-acetyl-L-lysyl-[histone] + CoA + H(+). It carries out the reaction L-lysyl-[protein] + acetyl-CoA = N(6)-acetyl-L-lysyl-[protein] + CoA + H(+). It catalyses the reaction (S)-lactoyl-CoA + L-lysyl-[protein] = N(6)-[(S)-lactoyl]-L-lysyl-[protein] + CoA + H(+). Its function is as follows. Acetylates histones, giving a specific tag for transcriptional activation. Mediates acetylation of histone H3 at 'Lys-18' and 'Lys-27' (H3K18ac and H3K27ac, respectively). Also acetylates non-histone proteins, like DDX21, FBL, IRF2, MAFG, NCOA3, POLR1E/PAF53 and FOXO1. Binds specifically to phosphorylated CREB and enhances its transcriptional activity toward cAMP-responsive genes. Acts as a coactivator of ALX1. Acts as a circadian transcriptional coactivator which enhances the activity of the circadian transcriptional activators: NPAS2-BMAL1 and CLOCK-BMAL1 heterodimers. Acetylates PCNA; acetylation promotes removal of chromatin-bound PCNA and its degradation during nucleotide excision repair (NER). Acetylates POLR1E/PAF53, leading to decreased association of RNA polymerase I with the rDNA promoter region and coding region. Acetylates DDX21, thereby inhibiting DDX21 helicase activity. Acetylates FBL, preventing methylation of 'Gln-105' of histone H2A (H2AQ104me). In addition to protein acetyltransferase, can use different acyl-CoA substrates, such as lactoyl-CoA, and is able to mediate protein lactylation. Catalyzes lactylation of MRE11 in response to DNA damage, thereby promoting DNA double-strand breaks (DSBs) via homologous recombination (HR). Functions as a transcriptional coactivator for SMAD4 in the TGF-beta signaling pathway. The sequence is that of Histone lysine acetyltransferase CREBBP (Crebbp) from Rattus norvegicus (Rat).